The primary structure comprises 243 residues: DNA polymerase III subunit epsilon (243 aa).

Residues D12 and E14 each contribute to the a divalent metal cation site. Substrate is bound by residues D12, E14, E61, and H66. H162 serves as the catalytic Proton acceptor. Position 167 (D167) interacts with a divalent metal cation. Position 167 (D167) interacts with substrate.

In a ternary complex this subunit contacts both the beta sliding clamp (dnaN) and the polymerase subunit (dnaE). The DNA polymerase III holoenzyme complex contains at least 10 different subunits organized into 3 functionally essential subassemblies: the Pol III core, the beta sliding clamp processivity factor and the clamp-loading complex. The Pol III core (subunits alpha, epsilon and theta) contains the polymerase and the 3'-5' exonuclease proofreading activities. The polymerase is tethered to the template via the dimeric beta sliding clamp processivity factor. The clamp loader (also called gamma complex) assembles the beta sliding clamp onto the primed template and plays a central role in the organization and communication at the replication fork. The clamp-loading complex contains delta, delta', psi and chi, and 3 copies of either or both of two different DnaX proteins, gamma and tau. The DNA replisome complex has a single clamp loader (3 tau and 1 each of delta, delta', psi and chi subunits) which binds 3 Pol III cores (1 core on the leading strand and 2 on the lagging strand) each with a beta sliding clamp dimer. Additional proteins in the replisome are other copies of gamma, psi and chi, Ssb, DNA helicase and RNA primase. Mg(2+) serves as cofactor. Mn(2+) is required as a cofactor.

It catalyses the reaction DNA(n) + a 2'-deoxyribonucleoside 5'-triphosphate = DNA(n+1) + diphosphate. Its function is as follows. DNA polymerase III is a complex, multichain enzyme responsible for most of the replicative synthesis in bacteria. The epsilon subunit contain the editing function and is a proofreading 3'-5' exonuclease. Contacts both the beta sliding clamp (dnaN) and the polymerase subunit (dnaE), stabilizing their interaction. In Escherichia coli (strain K12), this protein is DNA polymerase III subunit epsilon (dnaQ).